The chain runs to 64 residues: Orcokinin peptides (64 aa).

2 propeptides span residues 1–6 (MNIRPG) and 23–24 (NI).

This sequence belongs to the orcokinin family. Orcokinin-3 is expressed throughout the central nervous system (at protein level).

The protein resides in the secreted. In terms of biological role, myotropic peptides. The protein is Orcokinin peptides of Camponotus floridanus (Florida carpenter ant).